Here is a 358-residue protein sequence, read N- to C-terminus: NADH-quinone oxidoreductase subunit H (358 aa).

A run of 8 helical transmembrane segments spans residues 20–40, 95–115, 128–148, 168–188, 206–226, 253–273, 295–315, and 334–354; these read ITVG…IPLI, ALFY…WAVI, IGLL…IIAG, ISYE…SGSM, VFSW…ISAV, GFAF…IAAL, TPSA…YLWI, and VLIP…ISPL.

This sequence belongs to the complex I subunit 1 family. As to quaternary structure, NDH-1 is composed of 14 different subunits. Subunits NuoA, H, J, K, L, M, N constitute the membrane sector of the complex.

The protein localises to the cell inner membrane. The catalysed reaction is a quinone + NADH + 5 H(+)(in) = a quinol + NAD(+) + 4 H(+)(out). In terms of biological role, NDH-1 shuttles electrons from NADH, via FMN and iron-sulfur (Fe-S) centers, to quinones in the respiratory chain. The immediate electron acceptor for the enzyme in this species is believed to be ubiquinone. Couples the redox reaction to proton translocation (for every two electrons transferred, four hydrogen ions are translocated across the cytoplasmic membrane), and thus conserves the redox energy in a proton gradient. This subunit may bind ubiquinone. The polypeptide is NADH-quinone oxidoreductase subunit H (Neisseria meningitidis serogroup B (strain ATCC BAA-335 / MC58)).